Reading from the N-terminus, the 333-residue chain is MGSLGDELSLGSIFGRGVSMNVVAVEKVDEHVKKLEEEKRKLESCQLELPLSLQILNDAILYLKDKRCSEMETQPLLKDFISVNKPIQGERGIELLKREELMREKKFQQWKANDDHTSKIKSKLEIKRNEEKSPMLLIPKVETGLGLGLSSSSIRRKGIVASCGFTSNSMPQPPTPAVPQQPAFLKQQALRKQRRCWNPELHRRFVDALQQLGGPGVATPKQIREHMQEEGLTNDEVKSHLQKYRLHIRKPNSNAEKQSAVVLGFNLWNSSAQDEEETCEGGESLKRSNAQSDSPQGPLQLPSTTTTTGGDSSMEDVEDAKSESFQLERLRSP.

Residues 189-249 (ALRKQRRCWN…HLQKYRLHIR (61 aa)) enclose the HTH myb-type domain. The segment at residues 220–245 (PKQIREHMQEEGLTNDEVKSHLQKYR) is a DNA-binding region (H-T-H motif). The disordered stretch occupies residues 274–333 (DEEETCEGGESLKRSNAQSDSPQGPLQLPSTTTTTGGDSSMEDVEDAKSESFQLERLRSP). A compositionally biased stretch (polar residues) spans 287–303 (RSNAQSDSPQGPLQLPS). Residues 319-333 (DAKSESFQLERLRSP) are compositionally biased toward basic and acidic residues.

The protein resides in the nucleus. Its function is as follows. Probable transcription factor involved in phosphate signaling in roots. The sequence is that of Transcription factor HHO6 from Arabidopsis thaliana (Mouse-ear cress).